The chain runs to 335 residues: MWRLLATLSCLVLLTSARESLHFQPLSDELVNFINKQNTTWTAGHNFYNVDLSYVKKLCGTFLGGPKLPQRAAFAADMILPKSFDAREQWPNCPTIKEIRDQGSCGSCWAFGAVEAISDRICIRSNGRVNVEVSAEDMLTCCGDECGDGCNGGFPSGAWNFWTKKGLVSGGLYDSHVGCRPYSIPPCEHHVNGSRPPCTGEGDTPKCSKICEPGYTPSYKEDKHFGCSSYSISRNEKEIMAEIYKNGPVEGAFTVYSDFLQYKSGVYQHVTGDLMGGHAIRILGWGVENGTPYWLVGNSWNTDWGDNGFFKILRGQDHCGIESEIVAGIPCTPHF.

The signal sequence occupies residues Met-1 to Ala-17. A propeptide spans Arg-18 to Ile-79 (activation peptide). 6 disulfide bridges follow: Cys-93-Cys-122, Cys-105-Cys-150, Cys-141-Cys-207, Cys-142-Cys-146, Cys-179-Cys-211, and Cys-187-Cys-198. The active site involves Cys-108. N-linked (GlcNAc...) asparagine glycosylation is present at Asn-192. The residue at position 220 (Lys-220) is an N6-acetyllysine. The cysteines at positions 227 and 331 are disulfide-linked. Active-site residues include His-278 and Asn-298. The propeptide occupies Pro-333–Phe-335.

It belongs to the peptidase C1 family. In terms of assembly, dimer of a heavy chain and a light chain cross-linked by a disulfide bond. Interacts with SRPX2. Directly interacts with SHKBP1. As to expression, expressed in heart (at protein level).

The protein localises to the lysosome. It is found in the melanosome. Its subcellular location is the secreted. It localises to the extracellular space. The protein resides in the apical cell membrane. The enzyme catalyses Hydrolysis of proteins with broad specificity for peptide bonds. Preferentially cleaves -Arg-Arg-|-Xaa bonds in small molecule substrates (thus differing from cathepsin L). In addition to being an endopeptidase, shows peptidyl-dipeptidase activity, liberating C-terminal dipeptides.. Its function is as follows. Thiol protease which is believed to participate in intracellular degradation and turnover of proteins. Cleaves matrix extracellular phosphoglycoprotein MEPE. Involved in the solubilization of cross-linked TG/thyroglobulin in the thyroid follicle lumen. Has also been implicated in tumor invasion and metastasis. The polypeptide is Cathepsin B (CTSB) (Sus scrofa (Pig)).